A 259-amino-acid chain; its full sequence is L-erythrulose-1-phosphate isomerase (259 aa).

His-102 (electrophile) is an active-site residue. The active-site Proton acceptor is Glu-174.

This sequence belongs to the triosephosphate isomerase family.

The catalysed reaction is L-erythrulose 1-phosphate = D-erythrulose 4-phosphate. It participates in carbohydrate metabolism. Functionally, involved in catabolism of D-apiose. Catalyzes the isomerization of L-erythrulose 1-phosphate to D-erythrulose 4-phosphate. The sequence is that of L-erythrulose-1-phosphate isomerase from Pectobacterium atrosepticum (strain SCRI 1043 / ATCC BAA-672) (Erwinia carotovora subsp. atroseptica).